Reading from the N-terminus, the 504-residue chain is 2-isopropylmalate synthase (504 aa).

Positions 6 to 267 (IIIFDTTLRD…YTGIISKEIY (262 aa)) constitute a Pyruvate carboxyltransferase domain. Mn(2+)-binding residues include Asp15, His201, His203, and Asn237. The tract at residues 391-504 (EITDLLQSSG…LNSYLRIHKN (114 aa)) is regulatory domain.

This sequence belongs to the alpha-IPM synthase/homocitrate synthase family. LeuA type 1 subfamily. As to quaternary structure, homodimer. The cofactor is Mn(2+).

The protein resides in the cytoplasm. The enzyme catalyses 3-methyl-2-oxobutanoate + acetyl-CoA + H2O = (2S)-2-isopropylmalate + CoA + H(+). Its pathway is amino-acid biosynthesis; L-leucine biosynthesis; L-leucine from 3-methyl-2-oxobutanoate: step 1/4. Functionally, catalyzes the condensation of the acetyl group of acetyl-CoA with 3-methyl-2-oxobutanoate (2-ketoisovalerate) to form 3-carboxy-3-hydroxy-4-methylpentanoate (2-isopropylmalate). This Campylobacter concisus (strain 13826) protein is 2-isopropylmalate synthase.